Consider the following 485-residue polypeptide: Protein nucleotidyltransferase YdiU (485 aa).

Residues Gly90, Gly92, Arg93, Lys113, Asp125, Gly126, Arg176, and Arg183 each contribute to the ATP site. Catalysis depends on Asp252, which acts as the Proton acceptor. Mg(2+)-binding residues include Asn253 and Asp262. Asp262 provides a ligand contact to ATP.

Belongs to the SELO family. The cofactor is Mg(2+). Mn(2+) is required as a cofactor.

It catalyses the reaction L-seryl-[protein] + ATP = 3-O-(5'-adenylyl)-L-seryl-[protein] + diphosphate. It carries out the reaction L-threonyl-[protein] + ATP = 3-O-(5'-adenylyl)-L-threonyl-[protein] + diphosphate. The catalysed reaction is L-tyrosyl-[protein] + ATP = O-(5'-adenylyl)-L-tyrosyl-[protein] + diphosphate. The enzyme catalyses L-histidyl-[protein] + UTP = N(tele)-(5'-uridylyl)-L-histidyl-[protein] + diphosphate. It catalyses the reaction L-seryl-[protein] + UTP = O-(5'-uridylyl)-L-seryl-[protein] + diphosphate. It carries out the reaction L-tyrosyl-[protein] + UTP = O-(5'-uridylyl)-L-tyrosyl-[protein] + diphosphate. In terms of biological role, nucleotidyltransferase involved in the post-translational modification of proteins. It can catalyze the addition of adenosine monophosphate (AMP) or uridine monophosphate (UMP) to a protein, resulting in modifications known as AMPylation and UMPylation. This is Protein nucleotidyltransferase YdiU from Vibrio atlanticus (strain LGP32) (Vibrio splendidus (strain Mel32)).